Here is a 211-residue protein sequence, read N- to C-terminus: FMN-dependent NADH:quinone oxidoreductase 3 (211 aa).

Residue 102-105 participates in FMN binding; it reads MWNF.

The protein belongs to the azoreductase type 1 family. Homodimer. FMN serves as cofactor.

The enzyme catalyses 2 a quinone + NADH + H(+) = 2 a 1,4-benzosemiquinone + NAD(+). The catalysed reaction is N,N-dimethyl-1,4-phenylenediamine + anthranilate + 2 NAD(+) = 2-(4-dimethylaminophenyl)diazenylbenzoate + 2 NADH + 2 H(+). Its function is as follows. Quinone reductase that provides resistance to thiol-specific stress caused by electrophilic quinones. Also exhibits azoreductase activity. Catalyzes the reductive cleavage of the azo bond in aromatic azo compounds to the corresponding amines. The chain is FMN-dependent NADH:quinone oxidoreductase 3 from Bacillus cereus (strain ZK / E33L).